Consider the following 140-residue polypeptide: Large ribosomal subunit protein uL11 (140 aa).

The protein belongs to the universal ribosomal protein uL11 family. In terms of assembly, part of the ribosomal stalk of the 50S ribosomal subunit. Interacts with L10 and the large rRNA to form the base of the stalk. L10 forms an elongated spine to which L12 dimers bind in a sequential fashion forming a multimeric L10(L12)X complex. Post-translationally, one or more lysine residues are methylated.

Forms part of the ribosomal stalk which helps the ribosome interact with GTP-bound translation factors. This is Large ribosomal subunit protein uL11 from Campylobacter hominis (strain ATCC BAA-381 / DSM 21671 / CCUG 45161 / LMG 19568 / NCTC 13146 / CH001A).